Here is a 374-residue protein sequence, read N- to C-terminus: Anhydro-N-acetylmuramic acid kinase (374 aa).

Residue 12–19 (GTSLDGVD) coordinates ATP.

It belongs to the anhydro-N-acetylmuramic acid kinase family.

It catalyses the reaction 1,6-anhydro-N-acetyl-beta-muramate + ATP + H2O = N-acetyl-D-muramate 6-phosphate + ADP + H(+). Its pathway is amino-sugar metabolism; 1,6-anhydro-N-acetylmuramate degradation. The protein operates within cell wall biogenesis; peptidoglycan recycling. Functionally, catalyzes the specific phosphorylation of 1,6-anhydro-N-acetylmuramic acid (anhMurNAc) with the simultaneous cleavage of the 1,6-anhydro ring, generating MurNAc-6-P. Is required for the utilization of anhMurNAc either imported from the medium or derived from its own cell wall murein, and thus plays a role in cell wall recycling. The chain is Anhydro-N-acetylmuramic acid kinase from Enterobacter sp. (strain 638).